Here is a 495-residue protein sequence, read N- to C-terminus: Ectonucleoside triphosphate diphosphohydrolase 8 (495 aa).

Topologically, residues 1–8 (MGLTWKQR) are cytoplasmic. Residues 9 to 29 (VFTALLGAAAVSGLTALLLVL) form a helical membrane-spanning segment. The Extracellular segment spans residues 30 to 466 (VGTMNVLLPP…PAQGWAQSFG (437 aa)). A disulfide bridge connects residues C78 and C102. Catalysis depends on E168, which acts as the Proton acceptor. Residues C246 and C292 are joined by a disulfide bond. 2 N-linked (GlcNAc...) asparagine glycosylation sites follow: N303 and N324. Disulfide bonds link C328–C334 and C380–C403. A helical membrane pass occupies residues 467–487 (VWAAGVVFVVLTLAATLGAVA). Topologically, residues 488-495 (VQVFWLQD) are cytoplasmic.

It belongs to the GDA1/CD39 NTPase family. Requires Ca(2+) as cofactor. Mg(2+) serves as cofactor. N-glycosylated.

The protein localises to the cell membrane. It carries out the reaction a ribonucleoside 5'-triphosphate + 2 H2O = a ribonucleoside 5'-phosphate + 2 phosphate + 2 H(+). Its function is as follows. Canalicular ectonucleoside NTPDase responsible for the main hepatic NTPDase activity. Ectonucleoside NTPDases catalyze the hydrolysis of gamma- and beta-phosphate residues of nucleotides, playing a central role in concentration of extracellular nucleotides. Has activity toward ATP, ADP, UTP and UDP, but not toward AMP. The protein is Ectonucleoside triphosphate diphosphohydrolase 8 (ENTPD8) of Bos taurus (Bovine).